A 369-amino-acid chain; its full sequence is 4-hydroxy-3-methylbut-2-en-1-yl diphosphate synthase (flavodoxin) (369 aa).

[4Fe-4S] cluster is bound by residues Cys270, Cys273, Cys305, and Glu312.

This sequence belongs to the IspG family. The cofactor is [4Fe-4S] cluster.

It catalyses the reaction (2E)-4-hydroxy-3-methylbut-2-enyl diphosphate + oxidized [flavodoxin] + H2O + 2 H(+) = 2-C-methyl-D-erythritol 2,4-cyclic diphosphate + reduced [flavodoxin]. Its pathway is isoprenoid biosynthesis; isopentenyl diphosphate biosynthesis via DXP pathway; isopentenyl diphosphate from 1-deoxy-D-xylulose 5-phosphate: step 5/6. In terms of biological role, converts 2C-methyl-D-erythritol 2,4-cyclodiphosphate (ME-2,4cPP) into 1-hydroxy-2-methyl-2-(E)-butenyl 4-diphosphate. This is 4-hydroxy-3-methylbut-2-en-1-yl diphosphate synthase (flavodoxin) from Pseudomonas fluorescens (strain ATCC BAA-477 / NRRL B-23932 / Pf-5).